The sequence spans 85 residues: Conotoxin Cap15a (85 aa).

The N-terminal stretch at 1–23 (MEKLTFLILVATVLLTIHVLVQS) is a signal peptide. The propeptide occupies 24–49 (VGDKHLKRRPKQYATKHLSALMRGHR). Position 50 is a pyrrolidone carboxylic acid (Q50).

The protein belongs to the conotoxin O2 superfamily. Post-translationally, contains 4 disulfide bonds. In terms of tissue distribution, expressed by the venom duct.

The protein localises to the secreted. The protein is Conotoxin Cap15a of Conus capitaneus (Captain cone).